Consider the following 175-residue polypeptide: Bifunctional protein PyrR (175 aa).

Residues 40–41 (TR), Arg85, 102–110 (DDVLYTGRT), Arg135, and Val159 each bind substrate. The PRPP-binding signature appears at 98 to 110 (VIIIDDVLYTGRT).

Belongs to the purine/pyrimidine phosphoribosyltransferase family. PyrR subfamily. In terms of assembly, homodimer and homohexamer; in equilibrium.

It catalyses the reaction UMP + diphosphate = 5-phospho-alpha-D-ribose 1-diphosphate + uracil. Regulates transcriptional attenuation of the pyrimidine nucleotide (pyr) operon by binding in a uridine-dependent manner to specific sites on pyr mRNA. This disrupts an antiterminator hairpin in the RNA and favors formation of a downstream transcription terminator, leading to a reduced expression of downstream genes. Its function is as follows. Also displays a weak uracil phosphoribosyltransferase activity which is not physiologically significant. This chain is Bifunctional protein PyrR, found in Staphylococcus saprophyticus subsp. saprophyticus (strain ATCC 15305 / DSM 20229 / NCIMB 8711 / NCTC 7292 / S-41).